The following is an 884-amino-acid chain: Probable mixed-linked glucan synthase 9 (884 aa).

Residues 1–27 (MALSPAAAGRTGRNNNNDAGLADPLLP) show a composition bias toward low complexity. Residues 1-34 (MALSPAAAGRTGRNNNNDAGLADPLLPAGGGGGG) are disordered. Transmembrane regions (helical) follow at residues 73–93 (VLLHPYRLLTLVRLIAVVLFL) and 104–124 (AMWLWWISIAGDFWFGVTWLL). Aspartate 195 is an active-site residue. Residues aspartate 396 and aspartate 398 each contribute to the substrate site. Aspartate 565 is a catalytic residue. 6 helical membrane-spanning segments follow: residues 640-660 (TAYPVSALFMVVYDLLPVIWL), 672-692 (FSTYVAYLVAVIAMIEVIGLV), 708-728 (EQFYMIGATGVYLAAVLHIVL), 765-785 (LLAPTVVVMAVNVTAIGAAAG), 802-822 (AGLVFNVWVLVLLYPFALGIM), and 830-850 (CALFALLVAACAAVAAGFVAV).

Belongs to the glycosyltransferase 2 family. Plant cellulose synthase-like F subfamily.

The protein resides in the golgi apparatus membrane. May catalyze both beta-1,3 and beta-1,4 glycosidic linkage on beta-D-glucan. Essential for (1,3;1,4)-beta-D-glucans synthesis in grasses and cereals (Poaceae). The mixed-linked glucans (which are not present in walls of dicotyledons or most other monocotyledonous plants) are particularly important constituents of the walls of the starchy endosperm and aleurone cells of cereal grains such as oats, wheat, rice and barley. They can account for up to 70% by weight of the wall. The protein is Probable mixed-linked glucan synthase 9 (CSLF9) of Oryza sativa subsp. japonica (Rice).